The primary structure comprises 131 residues: D-ribose pyranase (131 aa).

Residue His-20 is the Proton donor of the active site. Residues Asp-28, His-98, and 120 to 122 each bind substrate; that span reads YAN.

The protein belongs to the RbsD / FucU family. RbsD subfamily. In terms of assembly, homodecamer.

It localises to the cytoplasm. The enzyme catalyses beta-D-ribopyranose = beta-D-ribofuranose. The protein operates within carbohydrate metabolism; D-ribose degradation; D-ribose 5-phosphate from beta-D-ribopyranose: step 1/2. Functionally, catalyzes the interconversion of beta-pyran and beta-furan forms of D-ribose. This Bacillus cereus (strain ZK / E33L) protein is D-ribose pyranase.